A 250-amino-acid polypeptide reads, in one-letter code: Small ribosomal subunit protein uS2 (250 aa).

It belongs to the universal ribosomal protein uS2 family.

This Paraburkholderia xenovorans (strain LB400) protein is Small ribosomal subunit protein uS2.